The sequence spans 329 residues: GTPase Obg (329 aa).

The 159-residue stretch at 1 to 159 folds into the Obg domain; it reads MQFIDQARIT…WPLQLELKLL (159 aa). Residues 160–328 enclose the OBG-type G domain; that stretch reads AEVGIIGLPN…LLDQVWQLLG (169 aa). Residues 166 to 173, 191 to 195, 213 to 216, 280 to 283, and 309 to 311 contribute to the ATP site; these read GLPNAGKS, FTTLV, DIPG, NKLE, and SAV. Positions 173 and 193 each coordinate Mg(2+).

Belongs to the TRAFAC class OBG-HflX-like GTPase superfamily. OBG GTPase family. In terms of assembly, monomer. Mg(2+) is required as a cofactor.

It is found in the cytoplasm. An essential GTPase which binds GTP, GDP and possibly (p)ppGpp with moderate affinity, with high nucleotide exchange rates and a fairly low GTP hydrolysis rate. Plays a role in control of the cell cycle, stress response, ribosome biogenesis and in those bacteria that undergo differentiation, in morphogenesis control. This is GTPase Obg from Synechococcus sp. (strain WH7803).